Consider the following 142-residue polypeptide: Transcription antitermination protein NusB (142 aa).

Belongs to the NusB family.

Functionally, involved in transcription antitermination. Required for transcription of ribosomal RNA (rRNA) genes. Binds specifically to the boxA antiterminator sequence of the ribosomal RNA (rrn) operons. This Streptococcus mutans serotype c (strain ATCC 700610 / UA159) protein is Transcription antitermination protein NusB.